A 471-amino-acid polypeptide reads, in one-letter code: 6-phosphofructo-2-kinase/fructose-2,6-bisphosphatase 1 (471 aa).

Residue S2 is modified to N-acetylserine. The interval 2–250 is 6-phosphofructo-2-kinase; the sequence is SPEMGELTQT…VYYLMNIHVT (249 aa). S33 carries the post-translational modification Phosphoserine; by PKA. An ATP-binding site is contributed by 49-57; sequence GLPARGKTY. Residues R82 and R105 each coordinate beta-D-fructose 6-phosphate. D131 is an active-site residue. T133 and R139 together coordinate beta-D-fructose 6-phosphate. Position 141 is a phosphoserine (S141). C161 is an active-site residue. 170 to 175 contributes to the ATP binding site; it reads NIRQVK. The beta-D-fructose 6-phosphate site is built by K175, R196, and Y200. The segment at 251-471 is fructose-2,6-bisphosphatase; it reads PRSIYLCRHG…EALDTVPAHY (221 aa). R258 provides a ligand contact to beta-D-fructose 2,6-bisphosphate. H259 serves as the catalytic Tele-phosphohistidine intermediate. Beta-D-fructose 2,6-bisphosphate is bound by residues N265, G271, and R308. The active-site Proton donor/acceptor is E328. The beta-D-fructose 2,6-bisphosphate site is built by Y339, R353, K357, Y368, Q394, and R398. Residue 350-353 participates in ATP binding; the sequence is FALR. ATP-binding positions include 394–398 and Y430; that span reads QAVMR.

This sequence in the C-terminal section; belongs to the phosphoglycerate mutase family. Homodimer. In terms of tissue distribution, liver.

The enzyme catalyses beta-D-fructose 2,6-bisphosphate + H2O = beta-D-fructose 6-phosphate + phosphate. The catalysed reaction is beta-D-fructose 6-phosphate + ATP = beta-D-fructose 2,6-bisphosphate + ADP + H(+). Its activity is regulated as follows. Phosphorylation at Ser-33 inhibits the kinase and activates the bisphosphatase. Synthesis and degradation of fructose 2,6-bisphosphate. The polypeptide is 6-phosphofructo-2-kinase/fructose-2,6-bisphosphatase 1 (Homo sapiens (Human)).